The sequence spans 549 residues: Carboxylesterase 1C (549 aa).

An N-terminal signal peptide occupies residues 1 to 18 (MWLCALVWASLAVCPIWG). The N-linked (GlcNAc...) asparagine glycan is linked to Asn-79. Cys-87 and Cys-116 are disulfide-bonded. The active-site Acyl-ester intermediate is the Ser-221. Residues Cys-273 and Cys-284 are joined by a disulfide bond. N-linked (GlcNAc...) asparagine glycans are attached at residues Asn-274, Asn-275, and Asn-302. Residue Glu-340 is the Charge relay system of the active site. An N-linked (GlcNAc...) asparagine glycan is attached at Asn-375. Catalysis depends on His-453, which acts as the Charge relay system. Ser-471 is subject to Phosphoserine. Asn-476 carries N-linked (GlcNAc...) asparagine glycosylation. Residues 546–549 (TEHT) carry the Prevents secretion from ER motif.

The protein belongs to the type-B carboxylesterase/lipase family.

It localises to the endoplasmic reticulum lumen. It carries out the reaction a carboxylic ester + H2O = an alcohol + a carboxylate + H(+). Its function is as follows. Involved in the detoxification of xenobiotics and in the activation of ester and amide prodrugs. Involved in the extracellular metabolism of lung surfactant. The polypeptide is Carboxylesterase 1C (Ces1c) (Rattus norvegicus (Rat)).